The sequence spans 1461 residues: Pleiotropic drug resistance protein 2 (1461 aa).

The ABC transporter 1 domain occupies 172-445; sequence LGLIHLSPSK…FEYMGFRCPE (274 aa). 205–212 contacts ATP; the sequence is GPPGSGKT. Positions 523 to 736 constitute an ABC transmembrane type-2 1 domain; sequence ELFKSCFTRE…GQNAIAINEF (214 aa). The next 6 membrane-spanning stretches (helical) occupy residues 541 to 561, 577 to 597, 622 to 642, 660 to 680, 685 to 705, and 771 to 791; these read FLYIFKTTQITIMATIALTVF, FWGALFFSLINVMFNGMQELA, LPIWVLKIPISLVESAIWIIL, LLAFIGVHQMALSLFRFIAAA, VVANTLGTFTLLMVFILGGFI, and ISIGALFGFSLLFNVLFIAAL. In terms of domain architecture, ABC transporter 2 spans 859–1111; the sequence is LAFNHVNYYV…KLVEYFETIP (253 aa). 904–911 contacts ATP; sequence GVSGAGKT. Residues 1184–1398 enclose the ABC transmembrane type-2 2 domain; sequence TQCKACFWKQ…TIYGIFASQV (215 aa). Transmembrane regions (helical) follow at residues 1203–1223, 1243–1263, 1291–1311, 1321–1341, 1348–1368, 1379–1399, and 1430–1450; these read YNAIRFFMTVIIGILFGVIFW, YAAVMFLGATNASAVQSVVAI, TIYVAIQTFVYSLLLFSMIGY, FYYFIFMCFTYFSMYGMMVVA, IAAIVMSFFLSFWNLFSGFLI, WYYWASPVAWTIYGIFASQVG, and FLLVVVFAHVGWVLLFFFVFA.

The protein belongs to the ABC transporter superfamily. ABCG family. PDR (TC 3.A.1.205) subfamily.

The protein resides in the membrane. Functionally, may be a general defense protein. The protein is Pleiotropic drug resistance protein 2 (PDR2) of Nicotiana plumbaginifolia (Leadwort-leaved tobacco).